The sequence spans 379 residues: MPLFQKEIALKLDIPENIENIKPYPPGKPLDELEREYGITDSIKLASNENPWGASPKAIKAIGESLGDMQRYPDGSAYYLTEAIAKYAGVGMSEIILGNGSNEVIEFLVKAFVQDDSEVITSHPSFLMYQKFVQVRGGVNRVIPLKDMHHDLQTILDTVNEKTRLIFIDNPNNPTGTYLEPELLIDFINSLPEHVILVLDEAYVDFMDLDKWLDVPSLIKNQAGRCGIVSLRTFSKAYGLSGLRVGFGLMAEEIVTCLHKVRQPFNVNSLAQVGALAALGDVDFYEQTLLKNRQGMKWLMKEIKGLGCEPFASQTNFFLIDVQGNADKLYTEMLYKGVIIRSMSAYGYPHYIRVTVGTTVENKRFLKALSDCLKELNYV.

Position 236 is an N6-(pyridoxal phosphate)lysine (lysine 236).

Belongs to the class-II pyridoxal-phosphate-dependent aminotransferase family. Histidinol-phosphate aminotransferase subfamily. As to quaternary structure, homodimer. Requires pyridoxal 5'-phosphate as cofactor.

It carries out the reaction L-histidinol phosphate + 2-oxoglutarate = 3-(imidazol-4-yl)-2-oxopropyl phosphate + L-glutamate. Its pathway is amino-acid biosynthesis; L-histidine biosynthesis; L-histidine from 5-phospho-alpha-D-ribose 1-diphosphate: step 7/9. The sequence is that of Histidinol-phosphate aminotransferase from Desulfotalea psychrophila (strain LSv54 / DSM 12343).